Reading from the N-terminus, the 367-residue chain is tRNA-specific 2-thiouridylase MnmA (367 aa).

ATP contacts are provided by residues Gly12 to Ser19 and Met38. Positions Asn98–Asp100 are interaction with target base in tRNA. The active-site Nucleophile is Cys103. Cys103 and Cys200 form a disulfide bridge. Gly128 contacts ATP. The interval Lys150 to Gln152 is interaction with tRNA. Cys200 serves as the catalytic Cysteine persulfide intermediate. The interval Arg312–Tyr313 is interaction with tRNA.

Belongs to the MnmA/TRMU family.

The protein localises to the cytoplasm. It carries out the reaction S-sulfanyl-L-cysteinyl-[protein] + uridine(34) in tRNA + AH2 + ATP = 2-thiouridine(34) in tRNA + L-cysteinyl-[protein] + A + AMP + diphosphate + H(+). In terms of biological role, catalyzes the 2-thiolation of uridine at the wobble position (U34) of tRNA, leading to the formation of s(2)U34. This chain is tRNA-specific 2-thiouridylase MnmA, found in Psychromonas ingrahamii (strain DSM 17664 / CCUG 51855 / 37).